Here is a 397-residue protein sequence, read N- to C-terminus: Ribosomal RNA large subunit methyltransferase I (397 aa).

The PUA domain maps to 2–81; sequence STTVYLQKDR…EQIDTEFFVR (80 aa).

The protein belongs to the methyltransferase superfamily. RlmI family.

Its subcellular location is the cytoplasm. It carries out the reaction cytidine(1962) in 23S rRNA + S-adenosyl-L-methionine = 5-methylcytidine(1962) in 23S rRNA + S-adenosyl-L-homocysteine + H(+). Specifically methylates the cytosine at position 1962 (m5C1962) of 23S rRNA. This chain is Ribosomal RNA large subunit methyltransferase I, found in Tolumonas auensis (strain DSM 9187 / NBRC 110442 / TA 4).